A 335-amino-acid chain; its full sequence is Cell division protein ZipA (335 aa).

The Periplasmic segment spans residues 1–4 (MDLN). A helical transmembrane segment spans residues 5-25 (AILIILGVIALIILVAHGIWS). The Cytoplasmic segment spans residues 26 to 335 (NRREKSQYFE…AERDYLARVS (310 aa)).

Belongs to the ZipA family. As to quaternary structure, interacts with FtsZ via their C-terminal domains.

It is found in the cell inner membrane. Essential cell division protein that stabilizes the FtsZ protofilaments by cross-linking them and that serves as a cytoplasmic membrane anchor for the Z ring. Also required for the recruitment to the septal ring of downstream cell division proteins. The protein is Cell division protein ZipA of Histophilus somni (strain 2336) (Haemophilus somnus).